A 213-amino-acid polypeptide reads, in one-letter code: MEESRLILALDVYDRERALEIAECTADYLWAIKVNWPLIIGSGLKIITELKQVTGLPIIADLKLADIPNTNRLIASKVFEAGADYIIAHGFVGRDSVEAVMELGKTIIVVEMSHPGAKEFIQPVTDKLIELANELEPFGVIAPATRPERVSYIRSRLERGIRILTPGVGAQGGKASDAIKAGADYVIVGRSIYGSNNPREAARRLYEEILEVV.

Substrate is bound by residues Asp-11, Lys-33, 61–70, Ser-113, 166–176, Gly-189, and Arg-190; these read DLKLADIPNT and PGVGAQGGKAS. Lys-63 (proton donor) is an active-site residue.

This sequence belongs to the OMP decarboxylase family. Type 1 subfamily. Homodimer.

The catalysed reaction is orotidine 5'-phosphate + H(+) = UMP + CO2. It participates in pyrimidine metabolism; UMP biosynthesis via de novo pathway; UMP from orotate: step 2/2. In terms of biological role, catalyzes the decarboxylation of orotidine 5'-monophosphate (OMP) to uridine 5'-monophosphate (UMP). The protein is Orotidine 5'-phosphate decarboxylase of Thermococcus kodakarensis (strain ATCC BAA-918 / JCM 12380 / KOD1) (Pyrococcus kodakaraensis (strain KOD1)).